A 216-amino-acid chain; its full sequence is Adenylate kinase (216 aa).

10–15 (GAGKGT) contacts ATP. Residues 30 to 59 (STGDMFRAAIKEGTPLGLQAKEYMDRGDLV) are NMP. AMP-binding positions include threonine 31, arginine 36, 57-59 (DLV), 85-88 (GFPR), and glutamine 92. The tract at residues 126–163 (GRRICKNCGATYHLVFNPPAKSGVCDKCGGELYQRADD) is LID. Position 127 (arginine 127) interacts with ATP. The Zn(2+) site is built by cysteine 130 and cysteine 133. An ATP-binding site is contributed by 136 to 137 (TY). Zn(2+) contacts are provided by cysteine 150 and cysteine 153. AMP-binding residues include arginine 160 and arginine 171. Glutamine 199 contacts ATP.

It belongs to the adenylate kinase family. Monomer.

The protein localises to the cytoplasm. The enzyme catalyses AMP + ATP = 2 ADP. It participates in purine metabolism; AMP biosynthesis via salvage pathway; AMP from ADP: step 1/1. In terms of biological role, catalyzes the reversible transfer of the terminal phosphate group between ATP and AMP. Plays an important role in cellular energy homeostasis and in adenine nucleotide metabolism. The chain is Adenylate kinase from Geobacillus sp. (strain WCH70).